A 536-amino-acid polypeptide reads, in one-letter code: MSDYENDDECWSVLEGFRVTLTSVIDPSRITPYLRQCKVLNPDDEEQVLSDPNLVIRKRKVGVLLDILQRTGHKGYVAFLESLELYYPQLYKKVTGKEPARVFSMIIDASGESGLTQLLMTEVMKLQKKVQDLTALLSSKDDFIKELRVKDSLLRKHQERVQRLKEECEAGSRELKRCKEENYDLAMRLAHQSEEKGAALMRNRDLQLEIDQLKHSLMKAEDDCKVERKHTLKLRHAMEQRPSQELLWELQQEKALLQARVQELEASVQEGKLDRSSPYIQVLEEDWRQALRDHQEQANTIFSLRKDLRQGEARRLRCMEEKEMFELQCLALRKDSKMYKDRIEAILLQMEEVAIERDQAIATREELHAQHARGLQEKDALRKQVRELGEKADELQLQVFQCEAQLLAVEGRLRRQQLETLVLSSDLEDGSPRRSQELSLPQDLEDTQLSDKGCLAGGGSPKQPFAALHQEQVLRNPHDAGLSSGEPPEKERRRLKESFENYRRKRALRKMQKGWRQGEEDRENTTGSDNTDTEGS.

Ser2 carries the post-translational modification Phosphoserine. Positions 3, 10, and 73 each coordinate Zn(2+). Residues 6 to 98 (NDDECWSVLE…QLYKKVTGKE (93 aa)) form the CARD domain. The tract at residues 99–116 (PARVFSMIIDASGESGLT) is linker. 2 coiled-coil regions span residues 117 to 277 (QLLM…DRSS) and 332 to 419 (LRKD…QQLE). Residue Lys125 forms a Glycyl lysine isopeptide (Lys-Gly) (interchain with G-Cter in ubiquitin) linkage. A Phosphothreonine modification is found at Thr231. Ser277 carries the phosphoserine modification. Phosphoserine occurs at positions 424, 425, 431, 450, 460, 483, and 498. Residues 427 to 536 (LEDGSPRRSQ…GSDNTDTEGS (110 aa)) are disordered. Basic and acidic residues predominate over residues 487-502 (PPEKERRRLKESFENY). Residues 503-513 (RRKRALRKMQK) are compositionally biased toward basic residues. Phosphothreonine; by CK2 occurs at positions 531 and 533.

As to quaternary structure, monomer. Homodimer; homodimerization is mediated by the CARD domain which forms an extensive interaction with the adjacent linker and coiled-coil regions; leads to an autoinhibited state. Homomultimer; polymerizes following activation, forming a nucleating helical template that seeds BCL10-filament formation via a CARD-CARD interaction. Interacts (via CARD domain) with BCL10 (via CARD domain); interaction takes place following CARD9 activation and polymerization, leading to the formation of a filamentous CBM complex assembly. Component of a CBM complex (CARD9-BCL10, MALT1), composed of CARD9, BCL10 and MALT1. Interacts with RASGRF1. Interacts with NOD2 (via NACHT domain); interaction is direct. Interacts with RIPK2. Interacts with VHL; without leading to protein degradation. In terms of processing, phosphorylated at Thr-231 by PRKCD downstream of C-type lectin receptors activation: phosphorylation promotes interaction with BCL10, followed by activation of NF-kappa-B and MAP kinase p38 pathways. Phosphorylated at Thr-531 and Thr-533 by CK2 following interaction with VHL, leading to inhibit the ability to activate NF-kappa-B. Post-translationally, ubiquitinated at Lys-125 via 'Lys-27'-linked ubiquitin by TRIM62 downstream of C-type lectin receptors activation; leading to CARD9 activation, followed by activation of NF-kappa-B and MAP kinase p38 pathways. Deubiquitinated at Lys-125 by USP15, inhibiting CARD9. In terms of tissue distribution, expression is restricted to several populations of phagocytes, such as macrophages, monocytes, and dendritic cells. Highly expressed in spleen. Also detected in liver, placenta, lung, peripheral blood leukocytes and in brain.

Its subcellular location is the cytoplasm. Its activity is regulated as follows. Maintained in an autoinhibited state via homodimerization in which the CARD domain forms an extensive interaction with the adjacent linker and coiled-coil regions. Activation downstream of C-type lectin receptors, by phosphorylation by PRKCD and/or ubiquitination by TRIM62, triggers disruption of the CARD domain-coiled coil interface, CARD9 homooligomerization and BCL10 recruitment, followed by activation of NF-kappa-B and MAP kinase p38 pathways. Zinc-binding inhibits activation by stabilizing the CARD ground-state conformation and restricting its capacity to form BCL10-nucleating filaments. Its function is as follows. Adapter protein that plays a key role in innate immune response against fungi by forming signaling complexes downstream of C-type lectin receptors. CARD9-mediated signals are essential for antifungal immunity against a subset of fungi from the phylum Ascomycota. Transduces signals in myeloid cells downstream of C-type lectin receptors CLEC7A (dectin-1), CLEC6A (dectin-2) and CLEC4E (Mincle), which detect pathogen-associated molecular pattern metabolites (PAMPs), such as fungal carbohydrates, and trigger CARD9 activation. Upon activation, CARD9 homooligomerizes to form a nucleating helical template that recruits BCL10 via CARD-CARD interaction, thereby promoting polymerization of BCL10 and subsequent recruitment of MALT1: this leads to activation of NF-kappa-B and MAP kinase p38 (MAPK11, MAPK12, MAPK13 and/or MAPK14) pathways which stimulate expression of genes encoding pro-inflammatory cytokines and chemokines. CARD9 signaling in antigen-presenting cells links innate sensing of fungi to the activation of adaptive immunity and provides a cytokine milieu that induces the development and subsequent of interleukin 17-producing T helper (Th17) cells. Also involved in activation of myeloid cells via classical ITAM-associated receptors and TLR: required for TLR-mediated activation of MAPK, while it is not required for TLR-induced activation of NF-kappa-B. CARD9 can also be engaged independently of BCL10: forms a complex with RASGRF1 downstream of C-type lectin receptors, which recruits and activates HRAS, leading to ERK activation and the production of cytokines. Acts as an important regulator of the intestinal commensal fungi (mycobiota) component of the gut microbiota. Plays an essential role in antifungal immunity against dissemination of gut fungi: acts by promoting induction of antifungal IgG antibodies response in CX3CR1(+) macrophages to confer protection against disseminated C.albicans or C.auris infection. Also mediates immunity against other pathogens, such as certain bacteria, viruses and parasites; CARD9 signaling is however redundant with other innate immune responses. In response to L.monocytogenes infection, required for the production of inflammatory cytokines activated by intracellular peptidoglycan: acts by connecting NOD2 recognition of peptidoglycan to downstream activation of MAP kinases (MAPK) without activating NF-kappa-B. This is Caspase recruitment domain-containing protein 9 from Homo sapiens (Human).